An 834-amino-acid polypeptide reads, in one-letter code: Ras GTPase-activating protein 3 (834 aa).

2 consecutive C2 domains span residues 1–112 (MAVE…DTWF) and 123–263 (VQGK…EAWY). Ala2 carries the N-acetylalanine modification. Residue Tyr66 is modified to Phosphotyrosine. Ser77 is subject to Phosphoserine. Thr110 carries the post-translational modification Phosphothreonine. One can recognise a Ras-GAP domain in the interval 346–561 (GRVVPFISAI…DAVKNFLDLI (216 aa)). The PH domain maps to 576–677 (ILLKEGFMIK…WIDILTKVSQ (102 aa)). The segment at 679-715 (NQKRLAVYHPSAYLNGHWLCCRASSDTAAGCSPCTGG) adopts a Btk-type zinc-finger fold. Residues His687, Cys698, Cys699, and Cys709 each coordinate Zn(2+). The interval 806–834 (KYGSQEHPIGDKSFQSYIRQQSETPAHSM) is disordered. Phosphoserine occurs at positions 809 and 833. The span at 818–834 (SFQSYIRQQSETPAHSM) shows a compositional bias: polar residues.

Its function is as follows. Inhibitory regulator of the Ras-cyclic AMP pathway. May bind inositol tetrakisphosphate (IP4). In Bos taurus (Bovine), this protein is Ras GTPase-activating protein 3 (RASA3).